A 445-amino-acid chain; its full sequence is Trigger factor (445 aa).

The PPIase FKBP-type domain occupies 162-247; that stretch reads GDQVTIDAIG…IKAVHTAEPT (86 aa).

It belongs to the FKBP-type PPIase family. Tig subfamily.

Its subcellular location is the cytoplasm. It catalyses the reaction [protein]-peptidylproline (omega=180) = [protein]-peptidylproline (omega=0). In terms of biological role, involved in protein export. Acts as a chaperone by maintaining the newly synthesized protein in an open conformation. Functions as a peptidyl-prolyl cis-trans isomerase. This Rickettsia peacockii (strain Rustic) protein is Trigger factor.